The following is a 308-amino-acid chain: Acyl transferase (308 aa).

Residues Ser116, Asp213, and His243 each act as charge relay system in the active site.

It belongs to the LuxD family.

Its pathway is lipid metabolism; fatty acid reduction for biolumincescence. Functionally, acyl transferase is part of the fatty acid reductase system required for aldehyde biosynthesis; it produces fatty acids for the luminescent reaction. The protein is Acyl transferase of Shewanella hanedai (Alteromonas hanedai).